Reading from the N-terminus, the 99-residue chain is Turripeptide OL71 (99 aa).

Contains 5 disulfide bonds. In terms of tissue distribution, expressed by the venom duct.

It is found in the secreted. Functionally, acts as a neurotoxin by inhibiting an ion channel. This is Turripeptide OL71 from Iotyrris olangoensis (Sea snail).